A 427-amino-acid polypeptide reads, in one-letter code: 3-phosphoshikimate 1-carboxyvinyltransferase (427 aa).

The 3-phosphoshikimate site is built by Lys22, Ser23, and Arg27. Lys22 contributes to the phosphoenolpyruvate binding site. Gly96 and Arg124 together coordinate phosphoenolpyruvate. 3-phosphoshikimate contacts are provided by Ser169, Ser170, Gln171, Ser197, Asp313, Asn336, and Lys340. Residue Gln171 coordinates phosphoenolpyruvate. Residue Asp313 is the Proton acceptor of the active site. Residues Arg344, Arg386, and Lys411 each contribute to the phosphoenolpyruvate site.

It belongs to the EPSP synthase family. As to quaternary structure, monomer.

The protein localises to the cytoplasm. It catalyses the reaction 3-phosphoshikimate + phosphoenolpyruvate = 5-O-(1-carboxyvinyl)-3-phosphoshikimate + phosphate. It functions in the pathway metabolic intermediate biosynthesis; chorismate biosynthesis; chorismate from D-erythrose 4-phosphate and phosphoenolpyruvate: step 6/7. Catalyzes the transfer of the enolpyruvyl moiety of phosphoenolpyruvate (PEP) to the 5-hydroxyl of shikimate-3-phosphate (S3P) to produce enolpyruvyl shikimate-3-phosphate and inorganic phosphate. In Escherichia coli O17:K52:H18 (strain UMN026 / ExPEC), this protein is 3-phosphoshikimate 1-carboxyvinyltransferase.